The chain runs to 188 residues: Pyridoxal 5'-phosphate synthase subunit PdxT (188 aa).

47–49 serves as a coordination point for L-glutamine; the sequence is GES. Cys-79 functions as the Nucleophile in the catalytic mechanism. L-glutamine-binding positions include Arg-106 and 134-135; that span reads IR. Residues His-169 and Glu-171 each act as charge relay system in the active site.

The protein belongs to the glutaminase PdxT/SNO family. In terms of assembly, in the presence of PdxS, forms a dodecamer of heterodimers. Only shows activity in the heterodimer.

It catalyses the reaction aldehydo-D-ribose 5-phosphate + D-glyceraldehyde 3-phosphate + L-glutamine = pyridoxal 5'-phosphate + L-glutamate + phosphate + 3 H2O + H(+). It carries out the reaction L-glutamine + H2O = L-glutamate + NH4(+). Its pathway is cofactor biosynthesis; pyridoxal 5'-phosphate biosynthesis. In terms of biological role, catalyzes the hydrolysis of glutamine to glutamate and ammonia as part of the biosynthesis of pyridoxal 5'-phosphate. The resulting ammonia molecule is channeled to the active site of PdxS. The protein is Pyridoxal 5'-phosphate synthase subunit PdxT of Caldicellulosiruptor bescii (strain ATCC BAA-1888 / DSM 6725 / KCTC 15123 / Z-1320) (Anaerocellum thermophilum).